The primary structure comprises 364 residues: MSGNSIGQNFVVTTFGESHGVALGCIIDGCPPGLELTEADMQHDLDRRRPGTSRYTTARREPDEVRILSGVFEGKTTGTSIGLLIENTDQRSQDYSNIKDLFRPGHADYTYQQKYGMRDYRGGGRSSARETAMRVAAGAVAKKYLKQVHGIEIYGFMSQLGPICAETIDLDQIEQNAFFFPDASKLEALDEYMRELKKSGDSIGAKISVIATGVPVGLGEPVFDRLDADIAHALMGINAVKGVEIGDGFGVVTQKGSEGRDLMSPQGFESNHAGGVLGGISSGQPIIAHIALKPTSSISVPGQSMTAQGEMAEVVTKGRHDPCVGIRAVPIAEAMLAIVLMDHLLRHRAQNQDVRSHTPVLGMR.

Residues 41–60 (MQHDLDRRRPGTSRYTTARR) form a disordered region. The NADP(+) site is built by Arg-48 and Arg-54. FMN-binding positions include 125 to 127 (RSS), 238 to 239 (NA), Gly-278, 293 to 297 (KPTSS), and Arg-319.

It belongs to the chorismate synthase family. Homotetramer. It depends on FMNH2 as a cofactor.

The enzyme catalyses 5-O-(1-carboxyvinyl)-3-phosphoshikimate = chorismate + phosphate. The protein operates within metabolic intermediate biosynthesis; chorismate biosynthesis; chorismate from D-erythrose 4-phosphate and phosphoenolpyruvate: step 7/7. Its function is as follows. Catalyzes the anti-1,4-elimination of the C-3 phosphate and the C-6 proR hydrogen from 5-enolpyruvylshikimate-3-phosphate (EPSP) to yield chorismate, which is the branch point compound that serves as the starting substrate for the three terminal pathways of aromatic amino acid biosynthesis. This reaction introduces a second double bond into the aromatic ring system. This chain is Chorismate synthase, found in Shewanella baltica (strain OS223).